The following is a 331-amino-acid chain: MKTSIRYALLAAALTAATPALADITVYNGQHKEAAQAVADAFTRATGIKVKLNSAKGDQLAGQIKEEGSRSPADVFYSEQIPALATLSAANLLEPLPASTINETRGKGVPVAAKKDWVALSGRSRVVVYDTRKLSEKDLEKSVLNYATPKWKNRIGYAPTSGAFLEQVVAIVKLKGEAAALKWLKGLKEYGKPYAKNSVALQAVENGEIDAALINNYYWHAFAREKGVQNVHTRLNFVRHRDPGALITYSGAAVLKSSQNKDEAKKFVAFLASKEGQRALTAVRAEYPLNPHVVSTFNLEPIAKLEAPQVSATTVSEKEHATRLLEQAGMK.

Residues methionine 1–alanine 22 form the signal peptide. The Fe cation site is built by histidine 31, glutamate 79, tyrosine 217, and tyrosine 218.

Belongs to the bacterial solute-binding protein 1 family.

It is found in the periplasm. Its function is as follows. This protein may be a central component in the iron-acquisition system. The polypeptide is Major ferric iron-binding protein (fbpA) (Neisseria meningitidis serogroup A / serotype 4A (strain DSM 15465 / Z2491)).